The sequence spans 148 residues: Leghemoglobin 3 (148 aa).

Residues 2-148 (GFTEKQEALV…LSAAIKKAMS (147 aa)) enclose the Globin domain. Residue Tyr30 is modified to Nitrated tyrosine. Residue Ser45 coordinates heme b. Ser45 carries the phosphoserine modification. His63 lines the O2 pocket. 3 residues coordinate heme b: Lys66, His95, and Lys98. Tyr136 carries the post-translational modification Nitrated tyrosine.

This sequence belongs to the plant globin family. Monomer. Post-translationally, nitrated in effective nodules and particularly in hypoxic conditions; this mechanism may play a protective role in the symbiosis by buffering toxic peroxynitrite NO(2)(-). Nitration level decrease during nodule senescence. Phosphorylation at Ser-45 disrupts the molecular environment of its porphyrin ring oxygen binding pocket, thus leading to a reduced oxygen consumption and to the delivery of oxygen O(2) to symbiosomes. As to expression, stem nodules.

It localises to the cytoplasm. The protein localises to the cytosol. Its subcellular location is the nucleus. Leghemoglobin that reversibly binds oxygen O(2) through a pentacoordinated heme iron. In stem nodules, facilitates the diffusion of oxygen to the bacteroids while preventing the bacterial nitrogenase from being inactivated by buffering dioxygen, nitric oxide and carbon monoxide, and promoting the formation of reactive oxygen species (ROS, e.g. H(2)O(2)). This role is essential for symbiotic nitrogen fixation (SNF). The sequence is that of Leghemoglobin 3 from Sesbania rostrata.